The chain runs to 400 residues: Diphosphomevalonate decarboxylase (400 aa).

(R)-5-diphosphomevalonate is bound by residues 25 to 28, Arg80, 155 to 160, and Thr211; these read YWGK and SGSACR.

The protein belongs to the diphosphomevalonate decarboxylase family. As to quaternary structure, homodimer.

The protein localises to the cytoplasm. The enzyme catalyses (R)-5-diphosphomevalonate + ATP = isopentenyl diphosphate + ADP + phosphate + CO2. The protein operates within steroid biosynthesis; cholesterol biosynthesis. In terms of biological role, catalyzes the ATP dependent decarboxylation of (R)-5-diphosphomevalonate to form isopentenyl diphosphate (IPP). Functions in the mevalonate (MVA) pathway leading to isopentenyl diphosphate (IPP), a key precursor for the biosynthesis of isoprenoids and sterol synthesis. The polypeptide is Diphosphomevalonate decarboxylase (mvd) (Danio rerio (Zebrafish)).